Here is a 933-residue protein sequence, read N- to C-terminus: Dual 3',5'-cyclic-AMP and -GMP phosphodiesterase 11A (933 aa).

The disordered stretch occupies residues His-42–Phe-125. Phosphoserine occurs at positions 162, 163, and 239. 2 GAF domains span residues Asp-217 to Ile-370 and Asp-402 to Ile-558. 3',5'-cyclic GMP is bound at residue Ser-424. In terms of domain architecture, PDEase spans Ser-588–Arg-912. Catalysis depends on His-664, which acts as the Proton donor. The a divalent metal cation site is built by His-668, His-704, Asp-705, and Asp-816.

The protein belongs to the cyclic nucleotide phosphodiesterase family. A divalent metal cation serves as cofactor. Isoform 1 is present in prostate, pituitary, heart and liver. It is however not present in testis nor in penis, suggesting that weak inhibition by Tadalafil (Cialis) is not relevant (at protein level). Isoform 2 may be expressed in testis. Isoform 4 is expressed in adrenal cortex.

The protein resides in the cytoplasm. It is found in the cytosol. The enzyme catalyses 3',5'-cyclic GMP + H2O = GMP + H(+). The catalysed reaction is 3',5'-cyclic AMP + H2O = AMP + H(+). Its activity is regulated as follows. Inhibited by 3-isobutyl-1-methylxanthine (IBMX), zaprinast and dipyridamole. cGMP acts as an allosteric activator. Weakly inhibited by Sildenafil (Viagra) and Tadalafil (Cialis); however, the fact that the protein is probably absent from testis, suggests that it is not biologically relevant and is not related with erectile dysfunction. In terms of biological role, plays a role in signal transduction by regulating the intracellular concentration of cyclic nucleotides cAMP and cGMP. Catalyzes the hydrolysis of both cAMP and cGMP to 5'-AMP and 5'-GMP, respectively. The chain is Dual 3',5'-cyclic-AMP and -GMP phosphodiesterase 11A from Homo sapiens (Human).